A 508-amino-acid chain; its full sequence is Probable cytosol aminopeptidase (508 aa).

Mn(2+) contacts are provided by Lys276 and Asp281. Lys288 is an active-site residue. 3 residues coordinate Mn(2+): Asp299, Asp358, and Glu360. The active site involves Arg362.

This sequence belongs to the peptidase M17 family. It depends on Mn(2+) as a cofactor.

The protein localises to the cytoplasm. It carries out the reaction Release of an N-terminal amino acid, Xaa-|-Yaa-, in which Xaa is preferably Leu, but may be other amino acids including Pro although not Arg or Lys, and Yaa may be Pro. Amino acid amides and methyl esters are also readily hydrolyzed, but rates on arylamides are exceedingly low.. It catalyses the reaction Release of an N-terminal amino acid, preferentially leucine, but not glutamic or aspartic acids.. Presumably involved in the processing and regular turnover of intracellular proteins. Catalyzes the removal of unsubstituted N-terminal amino acids from various peptides. The polypeptide is Probable cytosol aminopeptidase (Chlorobium luteolum (strain DSM 273 / BCRC 81028 / 2530) (Pelodictyon luteolum)).